Reading from the N-terminus, the 1203-residue chain is MTVMSLSRDLKDDFHSDTVLSILNEQRIRGILCDVTIIVEDTKFKAHSNVLAASSLYFKNIFWSHTICISSHVLELDDLKAEVFTEILNYIYSSTVVVRRQETVTDLAAAGKRLGISFLEDLSDRNFSNSPGPYVVCITEKGVVKEEKNEKRHEEPAVTNGPRITNAFSIIETENSNSMFSPLDLRASFKKVSDAMRTTSLCQERASVCPEAEPVRTLAEHSYAVSSITEAYRSQPLREHDSSSSSGKTGKENGEALTTKAKPCRKPKTQTQDSDSTTENMPLPLVTCPEVNQERSPQPAPILSHSEPPSSEGDVHFPREDENQPSETPGPPAAEVPPLVYNCSCCSKSFDSSTLLGAHMQLHKPTQDPFVCKYCNKQFTTLNRLDRHEQICMRSSHMPMPGGNQPFLENYPTIGQDGGSFTSPDSLVPESRIGELSSAGSALSDADHMVKFVNGQMLYSCVVCKRSYVTLSSLRRHANVHSWRRTYPCHYCNKVFALAEYRTRHEIWHTGERRYQCIFCLETFMTYYILKNHQKSFHAIDHRLSISKKTANGGLKPTVYPYKLYRLLPMRCKRAPYKSYRNSSYESAQGNRQRNESPPDTFVIPNLPSSEMPTLNFQDGRNSLTSSPAIPVETPSWQGTPTSAKVKNAEGLKWRKQALKTDLVDSAEVSISSIGNSVSTTLQAEPVCVSSGEHSASVISYSGLVPSVIVHSSQFSSVIKHSNAIACLANSNHQSPSQPVASPSLIKDSKPEADKASKLASRPKNSKEKKKTVPCNRGEITEEAKYVADLGGSSGKTTNVVEETSKIETYIAKPALPGTSTNSNVAPLCQITVKIGNEAIVKRHILGSKLFYKRGRKPKYQMQEETLPRESDPETRGDSPLGLCQADCVEMSEAFDEVSDQDSTDKPWRPYYNYKPKKKSKQLRKIRKVKWRKERGSRSPVGRRRYPAELDRAEMGRRRYPAELDRCAEVKLPPDKASEEEENKEMPKLQCELCDGDKAAGAGAEGKPHQHLTLKPYICELCAKQFQSSSTLKMHMRCHTGEKPYQCKTCGRRFSVQGNLQKHERIHLGVKEFICQYCNKAFTLNETLKIHERIHTGEKRYHCQFCFQGFLYLSTKRNHERRHVREHDGKGFACFQCPKICKTAAALRMHQKKHLFKTLTKQEETDDLCHENSDLLESQPCTDSEDSDQKDDIKKPLLKMSFE.

Positions 33 to 100 constitute a BTB domain; sequence CDVTIIVEDT…IYSSTVVVRR (68 aa). Lysine 43 is covalently cross-linked (Glycyl lysine isopeptide (Lys-Gly) (interchain with G-Cter in SUMO2)). Serine 130 bears the Phosphoserine mark. Glycyl lysine isopeptide (Lys-Gly) (interchain with G-Cter in SUMO2) cross-links involve residues lysine 145, lysine 148, lysine 151, and lysine 260. The segment at 230 to 334 is disordered; it reads EAYRSQPLRE…PSETPGPPAA (105 aa). The segment covering 269 to 280 has biased composition (polar residues); it reads TQTQDSDSTTEN. The interval 299–522 is interaction with CBFA2T3; it reads PAPILSHSEP…RRYQCIFCLE (224 aa). Positions 313–322 are enriched in basic and acidic residues; that stretch reads GDVHFPREDE. The C2H2-type 1 zinc-finger motif lies at 341-363; it reads YNCSCCSKSFDSSTLLGAHMQLH. The C2H2-type 2; degenerate zinc finger occupies 370-394; the sequence is FVCKYCNKQFTTLNRLDRHEQICMR. 3 consecutive C2H2-type zinc fingers follow at residues 459-481, 487-509, and 515-538; these read YSCV…ANVH, YPCH…EIWH, and YQCI…KSFH. Residues lysine 549 and lysine 556 each participate in a glycyl lysine isopeptide (Lys-Gly) (interchain with G-Cter in SUMO2) cross-link. Polar residues-rich tracts occupy residues 581–598, 607–628, 635–644, and 731–741; these read RNSS…NESP, LPSS…TSSP, PSWQGTPTSA, and SNHQSPSQPVA. Disordered stretches follow at residues 581–644 and 731–776; these read RNSS…PTSA and SNHQ…VPCN. Basic and acidic residues predominate over residues 747–757; the sequence is KDSKPEADKAS. Glycyl lysine isopeptide (Lys-Gly) (interchain with G-Cter in SUMO2) cross-links involve residues lysine 750, lysine 755, lysine 796, lysine 806, lysine 813, lysine 834, lysine 842, and lysine 849. 2 disordered regions span residues 857-882 and 895-914; these read KPKY…SPLG and FDEV…YYNY. Over residues 866–877 the composition is skewed to basic and acidic residues; it reads TLPRESDPETRG. Glycyl lysine isopeptide (Lys-Gly) (interchain with G-Cter in SUMO2) cross-links involve residues lysine 915, lysine 971, lysine 976, lysine 984, lysine 988, lysine 998, lysine 1024, and lysine 1033. 5 C2H2-type zinc fingers span residues 1017-1039, 1045-1067, 1073-1095, 1101-1123, and 1132-1154; these read YICE…MRCH, YQCK…ERIH, FICQ…ERIH, YHCQ…ERRH, and FACF…QKKH. Residues lysine 1116, lysine 1139, lysine 1142, lysine 1157, and lysine 1190 each participate in a glycyl lysine isopeptide (Lys-Gly) (interchain with G-Cter in SUMO2) cross-link. The segment at 1172 to 1203 is disordered; that stretch reads NSDLLESQPCTDSEDSDQKDDIKKPLLKMSFE.

As to quaternary structure, interacts with CBFA2T3, ZBTB4 and RBBP6. In terms of processing, ubiquitinated by RBBP6; leading to its degradation by the proteasome. In terms of tissue distribution, widely expressed throughout the adult brain where it is found mainly in neurons. Also expressed in the adrenal medulla. Not detected in non-neural tissues including heart, spleen, liver and muscle. In the embryo, expressed in the developing brain and spinal cord but not in the migratory neural crest. Also expressed in the limbs, transiently in somites, and in the embryonic liver. In the embryonic neural tube, expression is restricted to late postmitotic neurons.

It localises to the nucleus. The protein localises to the chromosome. Its function is as follows. Transcriptional regulator with bimodal DNA-binding specificity. Binds with a higher affinity to methylated CpG dinucleotides in the consensus sequence 5'-CGCG-3' but can also bind to E-box elements (5'-CACGTG-3'). Can also bind specifically to a single methyl-CpG pair. Represses transcription in a methyl-CpG-dependent manner. Plays an important role in regulating DNA-replication and common fragile sites (CFS) stability in a RBBP6- and MCM10-dependent manner; represses expression of MCM10 which plays an important role in DNA-replication. Acts as a transcriptional activator. May be involved in the differentiation and/or survival of late postmitotic neurons. This is Zinc finger and BTB domain-containing protein 38 from Rattus norvegicus (Rat).